An 85-amino-acid chain; its full sequence is Latartoxin-1a (85 aa).

The first 19 residues, 1–19 (MKVLVFAIVCSVLLQVVLS), serve as a signal peptide directing secretion. Residues 20–25 (ADEEAR) constitute a propeptide, removed in mature form. A Processing quadruplet motif motif is present at residues 22–25 (EEAR). Cystine bridges form between cysteine 27–cysteine 42, cysteine 34–cysteine 47, cysteine 41–cysteine 64, and cysteine 49–cysteine 62.

Belongs to the neurotoxin 19 (CSTX) family. Post-translationally, contains 4 disulfide bonds. Cleavage of the propeptide depends on the processing quadruplet motif (XXXR, with at least one of X being E). In terms of tissue distribution, expressed by the venom gland.

It is found in the secreted. Insect toxin. Causes paralysis in larvae of C.vicina by depolarizing membranes at the neuromuscular junction. The protein is Latartoxin-1a of Lachesana tarabaevi (Spider).